The following is a 411-amino-acid chain: Na(+)-translocating NADH-quinone reductase subunit F (411 aa).

Residues Val5–Ile25 form a helical membrane-spanning segment. The region spanning Gly36–Ile130 is the 2Fe-2S ferredoxin-type domain. [2Fe-2S] cluster is bound by residues Cys73, Cys79, Cys82, and Cys114. The 141-residue stretch at Val133–Lys273 folds into the FAD-binding FR-type domain.

The protein belongs to the NqrF family. In terms of assembly, composed of six subunits; NqrA, NqrB, NqrC, NqrD, NqrE and NqrF. The cofactor is [2Fe-2S] cluster. Requires FAD as cofactor.

The protein localises to the cell inner membrane. The catalysed reaction is a ubiquinone + n Na(+)(in) + NADH + H(+) = a ubiquinol + n Na(+)(out) + NAD(+). In terms of biological role, NQR complex catalyzes the reduction of ubiquinone-1 to ubiquinol by two successive reactions, coupled with the transport of Na(+) ions from the cytoplasm to the periplasm. The first step is catalyzed by NqrF, which accepts electrons from NADH and reduces ubiquinone-1 to ubisemiquinone by a one-electron transfer pathway. The protein is Na(+)-translocating NADH-quinone reductase subunit F of Haemophilus influenzae (strain PittEE).